Reading from the N-terminus, the 101-residue chain is MAKKSSIEKNNRRKKMTKNAAPKRARLKAIIADKDLPMEERFAATLKLAEMPRNSSATRIRNRCEITGRARSVYRLNKLSRIAIRDLGSKGLVPGLVKSSW.

Basic and acidic residues predominate over residues Met-1 to Asn-10. The segment at Met-1–Lys-23 is disordered. Positions Asn-11 to Lys-23 are enriched in basic residues.

It belongs to the universal ribosomal protein uS14 family. In terms of assembly, part of the 30S ribosomal subunit. Contacts proteins S3 and S10.

Binds 16S rRNA, required for the assembly of 30S particles and may also be responsible for determining the conformation of the 16S rRNA at the A site. This chain is Small ribosomal subunit protein uS14, found in Rhodopseudomonas palustris (strain HaA2).